Consider the following 367-residue polypeptide: 15-cis-zeta-carotene isomerase, chloroplastic (367 aa).

The transit peptide at 1 to 58 (MAVYHLLLSSPPSLLLLPPSPRRPNLTLIRRIPAHPRLGNSTSLLSSSSPVIRKILVR) directs the protein to the chloroplast. 6 consecutive transmembrane segments (helical) span residues 95–115 (SWVY…VVWI), 137–157 (EVAM…LASL), 172–192 (VLFA…FINH), 211–231 (AIWV…FNLL), 269–289 (LWIG…HHLF), and 339–359 (LPYL…PLMQ).

Expressed in leaves and at lower levels in roots.

It is found in the plastid. The protein localises to the chloroplast membrane. It carries out the reaction 9,9',15-tri-cis-zeta-carotene = 9,9'-di-cis-zeta-carotene. Isomerase involved in the biosynthesis of carotenoids. Catalyzes the cis- to trans-conversion of the 15-cis-bond in 9,15,9'-tri-cis-zeta-carotene. The polypeptide is 15-cis-zeta-carotene isomerase, chloroplastic (Z-ISO) (Arabidopsis thaliana (Mouse-ear cress)).